Consider the following 100-residue polypeptide: Urease subunit gamma (100 aa).

It belongs to the urease gamma subunit family. Heterotrimer of UreA (gamma), UreB (beta) and UreC (alpha) subunits. Three heterotrimers associate to form the active enzyme.

The protein resides in the cytoplasm. It carries out the reaction urea + 2 H2O + H(+) = hydrogencarbonate + 2 NH4(+). It functions in the pathway nitrogen metabolism; urea degradation; CO(2) and NH(3) from urea (urease route): step 1/1. This chain is Urease subunit gamma, found in Bordetella bronchiseptica (strain ATCC BAA-588 / NCTC 13252 / RB50) (Alcaligenes bronchisepticus).